The sequence spans 1624 residues: ATP-binding cassette sub-family A member 9 (1624 aa).

A helical membrane pass occupies residues 31 to 51; that stretch reads LLEWLFSFLLVLFLYLFFSNL. 2 N-linked (GlcNAc...) asparagine glycosylation sites follow: Asn120 and Asn195. A run of 6 helical transmembrane segments spans residues 221 to 243, 269 to 289, 300 to 320, 329 to 349, 354 to 374, and 398 to 418; these read VATD…YVSV, SWGL…ALIV, FVMV…LAFL, FLTG…GFPA, LPAF…TVGM, and LIIA…VLTL. Residues 481 to 716 enclose the ABC transporter 1 domain; it reads IRIKNLKKEY…WGIGYHLSLH (236 aa). 517–524 contributes to the ATP binding site; it reads GHSGAGKT. The chain crosses the membrane as a helical span at residues 864–884; the sequence is LWTILLLFGISFIPQLLEHLF. N-linked (GlcNAc...) asparagine glycosylation is present at Asn949. 6 consecutive transmembrane segments (helical) span residues 1026–1046, 1065–1085, 1108–1128, 1136–1156, 1163–1183, and 1200–1220; these read TFFW…SSIG, AYWF…LLLM, ILCS…ISFI, SGIW…ATDL, GLFF…LFIF, and EIVY…LFIL. The ABC transporter 2 domain occupies 1288–1521; the sequence is LRKEYAGKKK…FGKDYLLEMK (234 aa). 1326 to 1333 contacts ATP; the sequence is GHNGAGKS.

This sequence belongs to the ABC transporter superfamily. ABCA family. As to expression, widely expressed with higher expression in heart.

The protein resides in the membrane. Its function is as follows. Transporter that may play a role in monocyte differentiation and lipid transport and homeostasis. The chain is ATP-binding cassette sub-family A member 9 (ABCA9) from Homo sapiens (Human).